Here is a 320-residue protein sequence, read N- to C-terminus: ATP-dependent 6-phosphofructokinase (320 aa).

Gly12 provides a ligand contact to ATP. ADP-binding positions include 22–26 (RGVVR) and 55–60 (RYSVSD). ATP-binding positions include 73–74 (RF) and 103–106 (GDGS). Asp104 is a binding site for Mg(2+). 126–128 (TID) is a substrate binding site. The active-site Proton acceptor is Asp128. Arg155 lines the ADP pocket. Substrate contacts are provided by residues Arg163 and 170-172 (MGR). ADP contacts are provided by residues 186 to 188 (GCE), Lys212, and 214 to 216 (KKH). Substrate is bound by residues Glu223, Arg244, and 250–253 (HIQR).

This sequence belongs to the phosphofructokinase type A (PFKA) family. ATP-dependent PFK group I subfamily. Prokaryotic clade 'B1' sub-subfamily. In terms of assembly, homotetramer. Requires Mg(2+) as cofactor.

It is found in the cytoplasm. The catalysed reaction is beta-D-fructose 6-phosphate + ATP = beta-D-fructose 1,6-bisphosphate + ADP + H(+). It functions in the pathway carbohydrate degradation; glycolysis; D-glyceraldehyde 3-phosphate and glycerone phosphate from D-glucose: step 3/4. Allosterically activated by ADP and other diphosphonucleosides, and allosterically inhibited by phosphoenolpyruvate. In terms of biological role, catalyzes the phosphorylation of D-fructose 6-phosphate to fructose 1,6-bisphosphate by ATP, the first committing step of glycolysis. This is ATP-dependent 6-phosphofructokinase from Erwinia tasmaniensis (strain DSM 17950 / CFBP 7177 / CIP 109463 / NCPPB 4357 / Et1/99).